A 255-amino-acid polypeptide reads, in one-letter code: 4-hydroxy-tetrahydrodipicolinate reductase (255 aa).

Residues 8–13, 88–90, and 112–115 contribute to the NAD(+) site; these read GSTGRM, ATT, and SSNM. Histidine 144 acts as the Proton donor/acceptor in catalysis. Histidine 145 is a binding site for (S)-2,3,4,5-tetrahydrodipicolinate. Lysine 148 acts as the Proton donor in catalysis. 154–155 contributes to the (S)-2,3,4,5-tetrahydrodipicolinate binding site; it reads GT.

It belongs to the DapB family.

Its subcellular location is the cytoplasm. It carries out the reaction (S)-2,3,4,5-tetrahydrodipicolinate + NAD(+) + H2O = (2S,4S)-4-hydroxy-2,3,4,5-tetrahydrodipicolinate + NADH + H(+). The catalysed reaction is (S)-2,3,4,5-tetrahydrodipicolinate + NADP(+) + H2O = (2S,4S)-4-hydroxy-2,3,4,5-tetrahydrodipicolinate + NADPH + H(+). It functions in the pathway amino-acid biosynthesis; L-lysine biosynthesis via DAP pathway; (S)-tetrahydrodipicolinate from L-aspartate: step 4/4. Catalyzes the conversion of 4-hydroxy-tetrahydrodipicolinate (HTPA) to tetrahydrodipicolinate. The chain is 4-hydroxy-tetrahydrodipicolinate reductase from Sulfurovum sp. (strain NBC37-1).